The primary structure comprises 227 residues: PKHD-type hydroxylase Dtpsy_0528 (227 aa).

The region spanning 78–178 is the Fe2OG dioxygenase domain; that stretch reads TIYPPKFNRY…RVASFFWIES (101 aa). Positions 96, 98, and 159 each coordinate Fe cation. Arg169 provides a ligand contact to 2-oxoglutarate.

Requires Fe(2+) as cofactor. It depends on L-ascorbate as a cofactor.

The protein is PKHD-type hydroxylase Dtpsy_0528 of Acidovorax ebreus (strain TPSY) (Diaphorobacter sp. (strain TPSY)).